We begin with the raw amino-acid sequence, 950 residues long: Protocadherin alpha-13 (950 aa).

An N-terminal signal peptide occupies residues 1–29 (MLSSWQGGPRPRQLLLWLLILAAWETGSG). The Extracellular segment spans residues 30 to 697 (QLHYSVPEEA…GPEAALVDVN (668 aa)). Cadherin domains follow at residues 34–133 (SVPE…PPIF), 134–242 (PESK…APEF), 243–350 (YQSV…APEV), 351–455 (TITS…APAF), 456–565 (AQPE…APAL), and 581–678 (MPRS…APQA). N-linked (GlcNAc...) asparagine glycans are attached at residues asparagine 257 and asparagine 265. Asparagine 548 is a glycosylation site (N-linked (GlcNAc...) asparagine). A helical transmembrane segment spans residues 698–718 (VYLIIAICAVSSLLVLTLLLY). Topologically, residues 719–950 (TALRCSAPPT…GNSTTDNSDQ (232 aa)) are cytoplasmic. 6 PXXP repeats span residues 734 to 737 (PGKP), 774 to 777 (PSLP), 799 to 802 (PRQP), 832 to 835 (PGGP), 873 to 876 (PGNP), and 891 to 894 (PGSP). Residues 734–894 (PGKPTLVCSS…PDKFIIPGSP (161 aa)) are 6 X 4 AA repeats of P-X-X-P. Disordered regions lie at residues 780–806 (LGSAEGTGQREEDSECLKEPRQPNPDW) and 829–950 (RAGP…NSDQ). The segment covering 787-800 (GQREEDSECLKEPR) has biased composition (basic and acidic residues). The span at 909-923 (DKSDFITFGKKEETK) shows a compositional bias: basic and acidic residues.

The protein resides in the cell membrane. Functionally, potential calcium-dependent cell-adhesion protein. May be involved in the establishment and maintenance of specific neuronal connections in the brain. The polypeptide is Protocadherin alpha-13 (PCDHA13) (Homo sapiens (Human)).